Here is a 95-residue protein sequence, read N- to C-terminus: Probable FAD-linked sulfhydryl oxidase OPG072 (95 aa).

The Intravirion segment spans residues 1 to 8; that stretch reads MNPKHWGR. The region spanning 1-95 is the ERV/ALR sulfhydryl oxidase domain; it reads MNPKHWGRAV…AIDVSKVKPL (95 aa). A helical membrane pass occupies residues 9-25; that stretch reads AVWTIIFIVLSQAGLDG. The Virion surface portion of the chain corresponds to 26–95; it reads NIEACKRKLY…AIDVSKVKPL (70 aa). Residues cysteine 43 and cysteine 46 are joined by a disulfide bond.

The protein belongs to the orthopoxvirus OPG072 family. Interacts with OPG128; this interaction involves formation of a transient disulfide-bonded intermediate, allowing disulfide bond transfer. Requires FAD as cofactor.

Its subcellular location is the virion membrane. It localises to the host cytoplasm. The enzyme catalyses 2 R'C(R)SH + O2 = R'C(R)S-S(R)CR' + H2O2. In terms of biological role, FAD-dependent sulfhydryl oxidase that catalyzes disulfide bond formation. The complete pathway for formation of disulfide bonds in intracellular virion membrane proteins sequentially involves thiol-disulfide transfer between OPG072, OPG128 and OPG088. This chain is Probable FAD-linked sulfhydryl oxidase OPG072 (OPG072), found in Monkeypox virus.